Consider the following 198-residue polypeptide: Small ribosomal subunit protein eS1 (198 aa).

This sequence belongs to the eukaryotic ribosomal protein eS1 family.

This is Small ribosomal subunit protein eS1 from Nanoarchaeum equitans (strain Kin4-M).